A 1199-amino-acid chain; its full sequence is DNA polymerase beta (1199 aa).

It belongs to the DNA polymerase type-B family.

It catalyses the reaction DNA(n) + a 2'-deoxyribonucleoside 5'-triphosphate = DNA(n+1) + diphosphate. DNA-directed DNA polymerase involved in viral DNA replication. In Ornithodoros (relapsing fever ticks), this protein is DNA polymerase beta.